A 454-amino-acid chain; its full sequence is Aquaporin-7 (454 aa).

The Cytoplasmic segment spans residues 1–71; the sequence is MNINEPRDGG…LHLHNKTRNH (71 aa). A helical transmembrane segment spans residues 72-92; sequence FVATVAEFAGTTLFLFFAFSG. Residues 93–115 lie on the Extracellular side of the membrane; it reads TQVALLATPANDSNVVGTPSNPA. An N-linked (GlcNAc...) asparagine glycan is attached at asparagine 103. Residues 116–136 form a helical membrane-spanning segment; sequence QLLYVSLCFGFSLAVNAWVFF. Topologically, residues 137–163 are cytoplasmic; sequence RISGGLFNPAVTMGMCIVGALPYFRGL. Residues 144–146 carry the NPA 1 motif; it reads NPA. A helical membrane pass occupies residues 164–184; it reads LLIFAQIIGGIAAAAIVSALF. Topologically, residues 185–202 are extracellular; sequence PGPITFRTSLGGGTSIVQ. Residues 203-223 traverse the membrane as a helical segment; it reads GLFIEMFLTAELVFTIFMLAA. At 224 to 229 the chain is on the cytoplasmic side; that stretch reads EKHKGT. A helical transmembrane segment spans residues 230–250; that stretch reads FIAPIGIGLSLFIAELTGVYF. The Extracellular segment spans residues 251-274; the sequence is TGGSVNPARSFGPSVVSGQFTGYH. An NPA 2 motif is present at residues 256-258; it reads NPA. A helical membrane pass occupies residues 275–295; it reads WIYWVGPILGAILASAFYKFI. At 296–454 the chain is on the cytoplasmic side; that stretch reads KMLEYETANP…ENLRDNTHNN (159 aa). The segment at 343–454 is disordered; sequence GASHVHENGN…ENLRDNTHNN (112 aa).

It belongs to the MIP/aquaporin (TC 1.A.8) family.

The protein localises to the membrane. It carries out the reaction H2O(in) = H2O(out). In terms of biological role, water channel required to facilitate the transport of water across membranes. Involved in conidiation. The protein is Aquaporin-7 of Botryotinia fuckeliana (strain B05.10) (Noble rot fungus).